The sequence spans 122 residues: Structural protein p14.5 (122 aa).

2 disordered regions span residues 1–27 (MADF…LEYD) and 73–122 (EDNN…HKSK). At A2 the chain carries N-acetylalanine; by host. The segment covering 105–122 (KPKKKKHLFPKLSSHKSK) has biased composition (basic residues).

The protein belongs to the asfivirus structural protein p14.5 family. As to quaternary structure, interacts with the major capsid protein. Interacts with host IRF3; this interaction interferes with the recruitment of IRF3 to TBK1. Post-translationally, acetylated.

Its subcellular location is the virion. Structural protein required for transport of intracellular particles from the assembly sites to the plasma membrane. Binds to both ssDNA and dsDNA. Suppressed the activation of the cGAS/STING pathway by interfering with the recruitment of IRF3 to TBK1, which in turn suppresses IRF3 phosphorylation, decreasing interferon production. This chain is Structural protein p14.5, found in African swine fever virus (isolate Warthog/Namibia/Wart80/1980) (ASFV).